Consider the following 76-residue polypeptide: Sulfur carrier protein TusA (76 aa).

The active-site Cysteine persulfide intermediate is Cys14.

This sequence belongs to the sulfur carrier protein TusA family. Interacts with IscS.

It is found in the cytoplasm. It functions in the pathway tRNA modification. In terms of biological role, sulfur carrier protein involved in sulfur trafficking in the cell. Part of a sulfur-relay system required for 2-thiolation during synthesis of 2-thiouridine of the modified wobble base 5-methylaminomethyl-2-thiouridine (mnm(5)s(2)U) in tRNA. Interacts with IscS and stimulates its cysteine desulfurase activity. Accepts an activated sulfur from IscS, which is then transferred to TusD, and thus determines the direction of sulfur flow from IscS to 2-thiouridine formation. Also appears to be involved in sulfur transfer for the biosynthesis of molybdopterin. This is Sulfur carrier protein TusA from Buchnera aphidicola subsp. Acyrthosiphon pisum (strain 5A).